Consider the following 258-residue polypeptide: Acyl-[acyl-carrier-protein]--UDP-N-acetylglucosamine O-acyltransferase (258 aa).

The protein belongs to the transferase hexapeptide repeat family. LpxA subfamily. Homotrimer.

It is found in the cytoplasm. The catalysed reaction is a (3R)-hydroxyacyl-[ACP] + UDP-N-acetyl-alpha-D-glucosamine = a UDP-3-O-[(3R)-3-hydroxyacyl]-N-acetyl-alpha-D-glucosamine + holo-[ACP]. The protein operates within glycolipid biosynthesis; lipid IV(A) biosynthesis; lipid IV(A) from (3R)-3-hydroxytetradecanoyl-[acyl-carrier-protein] and UDP-N-acetyl-alpha-D-glucosamine: step 1/6. In terms of biological role, involved in the biosynthesis of lipid A, a phosphorylated glycolipid that anchors the lipopolysaccharide to the outer membrane of the cell. In Pseudomonas fluorescens (strain Pf0-1), this protein is Acyl-[acyl-carrier-protein]--UDP-N-acetylglucosamine O-acyltransferase.